A 468-amino-acid polypeptide reads, in one-letter code: Protein ABHD15 (468 aa).

A signal peptide spans 1-23 (MPPWGAALALILAVLALLGLLGP). Residues 33–61 (VGERTLPGAQDRDDGEEADGGGPADQFSD) are disordered. Catalysis depends on charge relay system residues Asp-360 and His-391. Position 434 is a phosphoserine (Ser-434).

Belongs to the AB hydrolase superfamily. AB hydrolase 4 family. Interacts with PDE3B; this interaction regulates PDE3B's stability and expression and, thereby, impacts the antilipolytic action of insulin.

The protein resides in the secreted. May regulate adipocyte lipolysis and liver lipid accumulation. This chain is Protein ABHD15, found in Homo sapiens (Human).